The chain runs to 106 residues: ATP-dependent Clp protease adapter protein ClpS (106 aa).

Polar residues predominate over residues 1–13 (MGNNSTWSQSENL). The segment at 1–21 (MGNNSTWSQSENLTADKQKEK) is disordered.

It belongs to the ClpS family. Binds to the N-terminal domain of the chaperone ClpA.

In terms of biological role, involved in the modulation of the specificity of the ClpAP-mediated ATP-dependent protein degradation. The polypeptide is ATP-dependent Clp protease adapter protein ClpS (Pectobacterium carotovorum subsp. carotovorum (strain PC1)).